Here is a 285-residue protein sequence, read N- to C-terminus: ATP synthase gamma chain (285 aa).

Belongs to the ATPase gamma chain family. F-type ATPases have 2 components, CF(1) - the catalytic core - and CF(0) - the membrane proton channel. CF(1) has five subunits: alpha(3), beta(3), gamma(1), delta(1), epsilon(1). CF(0) has three main subunits: a, b and c.

The protein localises to the cell membrane. Functionally, produces ATP from ADP in the presence of a proton gradient across the membrane. The gamma chain is believed to be important in regulating ATPase activity and the flow of protons through the CF(0) complex. The sequence is that of ATP synthase gamma chain from Geobacillus sp. (strain WCH70).